Here is a 474-residue protein sequence, read N- to C-terminus: Shugoshin-1 (474 aa).

Disordered regions lie at residues 1–53, 189–226, 322–356, and 422–442; these read MTST…KPNA, VESQSAVSSNTVCQEPPQDGKQKRMPQRRRSSRLNQGS, NSKQNHLTGSQSSLSFNTVDTPEPPEDNTVKRCSK, and VSMEQRTNQEQDGDCFSRKSN. Polar residues-rich tracts occupy residues 12–22 and 190–201; these read GSLNPPHSNPS and ESQSAVSSNTVC. The span at 211-220 shows a compositional bias: basic residues; sequence KRMPQRRRSS. Composition is skewed to polar residues over residues 322–341 and 422–431; these read NSKQNHLTGSQSSLSFNTVD and VSMEQRTNQE.

Belongs to the shugoshin family. Highly expressed in tissues containing meiocytes. Expressed at much lower level in leaves and pollen-containing flowers.

It is found in the nucleus. The protein localises to the chromosome. The protein resides in the centromere. Its function is as follows. Plays a central role in chromosome cohesion during meiosis I by preventing premature dissociation of cohesin complex from centromeres after prophase, when most of cohesin complex dissociates from chromosomes arms. Required for maintenance of centromeric cohesion before prophase II and correct segregation of chromatids during meiosis II. Has apparently no function in mitosis. The protein is Shugoshin-1 of Zea mays (Maize).